A 103-amino-acid polypeptide reads, in one-letter code: Small ribosomal subunit protein uS10 (103 aa).

The disordered stretch occupies residues 35-59 (LSGPVPLPTKTLEVPSRKSPDGEGT).

Belongs to the universal ribosomal protein uS10 family. As to quaternary structure, part of the 30S ribosomal subunit.

Its function is as follows. Involved in the binding of tRNA to the ribosomes. The chain is Small ribosomal subunit protein uS10 (rps10) from Haloarcula marismortui (strain ATCC 43049 / DSM 3752 / JCM 8966 / VKM B-1809) (Halobacterium marismortui).